Here is a 228-residue protein sequence, read N- to C-terminus: uncharacterized protein (228 aa).

A signal peptide spans 1–15 (MKQKYLFIASMALAG). The N-palmitoyl cysteine moiety is linked to residue Cys-16. Cys-16 carries the S-diacylglycerol cysteine lipid modification.

This sequence to P.multocida PM0015.

The protein localises to the cell membrane. This is an uncharacterized protein from Pasteurella multocida (strain Pm70).